Consider the following 84-residue polypeptide: ATP synthase subunit c (84 aa).

The next 2 membrane-spanning stretches (helical) occupy residues 8-28 and 56-76; these read VAGM…GGGI and IIGS…AILL.

The protein belongs to the ATPase C chain family. As to quaternary structure, F-type ATPases have 2 components, F(1) - the catalytic core - and F(0) - the membrane proton channel. F(1) has five subunits: alpha(3), beta(3), gamma(1), delta(1), epsilon(1). F(0) has three main subunits: a(1), b(2) and c(10-14). The alpha and beta chains form an alternating ring which encloses part of the gamma chain. F(1) is attached to F(0) by a central stalk formed by the gamma and epsilon chains, while a peripheral stalk is formed by the delta and b chains.

It is found in the cell membrane. Functionally, f(1)F(0) ATP synthase produces ATP from ADP in the presence of a proton or sodium gradient. F-type ATPases consist of two structural domains, F(1) containing the extramembraneous catalytic core and F(0) containing the membrane proton channel, linked together by a central stalk and a peripheral stalk. During catalysis, ATP synthesis in the catalytic domain of F(1) is coupled via a rotary mechanism of the central stalk subunits to proton translocation. Key component of the F(0) channel; it plays a direct role in translocation across the membrane. A homomeric c-ring of between 10-14 subunits forms the central stalk rotor element with the F(1) delta and epsilon subunits. This chain is ATP synthase subunit c, found in Clostridium novyi (strain NT).